The sequence spans 161 residues: F-box only protein 48 (161 aa).

The disordered stretch occupies residues 1–25 (MKKTSKKNNNFKIPGTELNSADAER). Residues 32-79 (RNFVELLPLEVTYKIFSQLDIQSLCRASRTCTGWNCAIRNNDSLWKPH) enclose the F-box domain.

The polypeptide is F-box only protein 48 (Fbxo48) (Mus musculus (Mouse)).